Consider the following 131-residue polypeptide: Translation initiation factor 5A (131 aa).

Lys36 carries the post-translational modification Hypusine.

Belongs to the eIF-5A family.

Its subcellular location is the cytoplasm. In terms of biological role, functions by promoting the formation of the first peptide bond. The chain is Translation initiation factor 5A from Sulfurisphaera tokodaii (strain DSM 16993 / JCM 10545 / NBRC 100140 / 7) (Sulfolobus tokodaii).